The following is a 650-amino-acid chain: Probable LIM domain-containing serine/threonine-protein kinase DDB_G0287001 (650 aa).

LIM zinc-binding domains follow at residues 4 to 63 (NNCG…KLNA) and 64 to 122 (RKCF…PSDK). Disordered regions lie at residues 118–138 (KPSD…LPGK), 171–197 (LSSS…SSFM), and 293–320 (LLNS…NLNT). A compositionally biased stretch (gly residues) spans 173 to 188 (SSGGSGNSISGSGGTN). Residues 386 to 643 (VAFGDVIASG…DTLKKISESL (258 aa)) form the Protein kinase domain. Residues 392–400 (IASGASGKV) and Lys413 each bind ATP. Asp509 (proton acceptor) is an active-site residue.

It belongs to the protein kinase superfamily. TKL Ser/Thr protein kinase family.

The catalysed reaction is L-seryl-[protein] + ATP = O-phospho-L-seryl-[protein] + ADP + H(+). It carries out the reaction L-threonyl-[protein] + ATP = O-phospho-L-threonyl-[protein] + ADP + H(+). The chain is Probable LIM domain-containing serine/threonine-protein kinase DDB_G0287001 from Dictyostelium discoideum (Social amoeba).